We begin with the raw amino-acid sequence, 20 residues long: Neurotoxin BmK 18(2) (20 aa).

The LCN-type CS-alpha/beta domain maps to 2–20 (RDAYIAEDYDCVYHCARDA).

This sequence belongs to the long (4 C-C) scorpion toxin superfamily. Sodium channel inhibitor family. Alpha subfamily. As to expression, expressed by the venom gland.

The protein localises to the secreted. Its function is as follows. Binds to sodium channels (Nav) and inhibits the inactivation of the activated channels, thereby blocking neuronal transmission. In Olivierus martensii (Manchurian scorpion), this protein is Neurotoxin BmK 18(2).